Here is a 361-residue protein sequence, read N- to C-terminus: Holliday junction branch migration complex subunit RuvB (361 aa).

Over residues 1 to 12 (MNWDETGPETDE) the composition is skewed to acidic residues. Residues 1-21 (MNWDETGPETDEPTGPVLDDR) are disordered. The segment at 13-199 (PTGPVLDDRL…FGFTGHMEFY (187 aa)) is large ATPase domain (RuvB-L). Residues Leu38, Arg39, Gly80, Lys83, Thr84, Thr85, 146–148 (EDF), Arg189, Tyr199, and Arg236 contribute to the ATP site. Thr84 contacts Mg(2+). Residues 200–270 (APAELERVLH…IAMAALKVYE (71 aa)) are small ATPAse domain (RuvB-S). Residues 273–361 (ARGLDRLDRA…AKGQQGLFGA (89 aa)) are head domain (RuvB-H). Arg309, Arg328, and Arg333 together coordinate DNA.

It belongs to the RuvB family. As to quaternary structure, homohexamer. Forms an RuvA(8)-RuvB(12)-Holliday junction (HJ) complex. HJ DNA is sandwiched between 2 RuvA tetramers; dsDNA enters through RuvA and exits via RuvB. An RuvB hexamer assembles on each DNA strand where it exits the tetramer. Each RuvB hexamer is contacted by two RuvA subunits (via domain III) on 2 adjacent RuvB subunits; this complex drives branch migration. In the full resolvosome a probable DNA-RuvA(4)-RuvB(12)-RuvC(2) complex forms which resolves the HJ.

It is found in the cytoplasm. The enzyme catalyses ATP + H2O = ADP + phosphate + H(+). In terms of biological role, the RuvA-RuvB-RuvC complex processes Holliday junction (HJ) DNA during genetic recombination and DNA repair, while the RuvA-RuvB complex plays an important role in the rescue of blocked DNA replication forks via replication fork reversal (RFR). RuvA specifically binds to HJ cruciform DNA, conferring on it an open structure. The RuvB hexamer acts as an ATP-dependent pump, pulling dsDNA into and through the RuvAB complex. RuvB forms 2 homohexamers on either side of HJ DNA bound by 1 or 2 RuvA tetramers; 4 subunits per hexamer contact DNA at a time. Coordinated motions by a converter formed by DNA-disengaged RuvB subunits stimulates ATP hydrolysis and nucleotide exchange. Immobilization of the converter enables RuvB to convert the ATP-contained energy into a lever motion, pulling 2 nucleotides of DNA out of the RuvA tetramer per ATP hydrolyzed, thus driving DNA branch migration. The RuvB motors rotate together with the DNA substrate, which together with the progressing nucleotide cycle form the mechanistic basis for DNA recombination by continuous HJ branch migration. Branch migration allows RuvC to scan DNA until it finds its consensus sequence, where it cleaves and resolves cruciform DNA. This Streptomyces griseus subsp. griseus (strain JCM 4626 / CBS 651.72 / NBRC 13350 / KCC S-0626 / ISP 5235) protein is Holliday junction branch migration complex subunit RuvB.